The primary structure comprises 372 residues: Tryptophan--tRNA ligase (372 aa).

The 'HIGH' region signature appears at 79 to 87 (PSGKFHFGH). Residues 247-268 (KLQPGLDGRKMSSSRPDSTIFL) are disordered. The 'KMSKS' region motif lies at 256-260 (KMSSS). The segment covering 257–267 (MSSSRPDSTIF) has biased composition (polar residues).

This sequence belongs to the class-I aminoacyl-tRNA synthetase family.

It localises to the cytoplasm. The enzyme catalyses tRNA(Trp) + L-tryptophan + ATP = L-tryptophyl-tRNA(Trp) + AMP + diphosphate + H(+). This chain is Tryptophan--tRNA ligase, found in Aeropyrum pernix (strain ATCC 700893 / DSM 11879 / JCM 9820 / NBRC 100138 / K1).